A 697-amino-acid chain; its full sequence is Elongation factor G (697 aa).

The tr-type G domain maps to 8–290; the sequence is ERYRNIGISA…AVLDFLPSPV (283 aa). Residues 17–24, 88–92, and 142–145 contribute to the GTP site; these read AHIDAGKT, DTPGH, and NKMD.

The protein belongs to the TRAFAC class translation factor GTPase superfamily. Classic translation factor GTPase family. EF-G/EF-2 subfamily.

It localises to the cytoplasm. Its function is as follows. Catalyzes the GTP-dependent ribosomal translocation step during translation elongation. During this step, the ribosome changes from the pre-translocational (PRE) to the post-translocational (POST) state as the newly formed A-site-bound peptidyl-tRNA and P-site-bound deacylated tRNA move to the P and E sites, respectively. Catalyzes the coordinated movement of the two tRNA molecules, the mRNA and conformational changes in the ribosome. This is Elongation factor G from Methylobacillus flagellatus (strain ATCC 51484 / DSM 6875 / VKM B-1610 / KT).